A 446-amino-acid chain; its full sequence is MTQELHIVGGGMAGSEAAWQAAHMGVDVVIHEMRPKVETFAHQTGNLAEMVCSNSFRSDDDEQNAVGLLHWEMRAANSLIMTTAGEHRLPAGGALAVDRDPFAESVTAKLKALPNVRVSYEEVTDLPTEGHWIFATGPLTSPALGEAIQRETGAERLAFFDAIAPIVYAESIDMSQAWMQSRYDKGETEEERTAYLNCPMTKDQYEAFIDALLAADKTEFHEGETAGYFDGCLPIEVMAERGRETLRHGPMKPVGLTNPHKPDEKAWAVVQLRRDNALGTLFNIVGFQTKMKYGAQTDVFRMIPGLENAKFARLGGIHRNTFLNSPTLLDHEMRLKSKPNIRFAGQVTGVEGYVESAAMGLLAGRMAAAEILGKDLPQVPQDSAMGALIHHITGGAEAKTFQPMNVNFGLFRPVEGLKGGRRGRKDRYKAYTDRAKVAWQEWLTNF.

G9–G14 contributes to the FAD binding site.

The protein belongs to the MnmG family. TrmFO subfamily. The cofactor is FAD.

It localises to the cytoplasm. The enzyme catalyses uridine(54) in tRNA + (6R)-5,10-methylene-5,6,7,8-tetrahydrofolate + NADH + H(+) = 5-methyluridine(54) in tRNA + (6S)-5,6,7,8-tetrahydrofolate + NAD(+). It catalyses the reaction uridine(54) in tRNA + (6R)-5,10-methylene-5,6,7,8-tetrahydrofolate + NADPH + H(+) = 5-methyluridine(54) in tRNA + (6S)-5,6,7,8-tetrahydrofolate + NADP(+). Catalyzes the folate-dependent formation of 5-methyl-uridine at position 54 (M-5-U54) in all tRNAs. This is Methylenetetrahydrofolate--tRNA-(uracil-5-)-methyltransferase TrmFO from Ruegeria sp. (strain TM1040) (Silicibacter sp.).